A 270-amino-acid chain; its full sequence is 5-deoxy-glucuronate isomerase (270 aa).

Belongs to the isomerase IolB family.

The enzyme catalyses 5-deoxy-D-glucuronate = 5-dehydro-2-deoxy-D-gluconate. The protein operates within polyol metabolism; myo-inositol degradation into acetyl-CoA; acetyl-CoA from myo-inositol: step 4/7. Functionally, involved in the isomerization of 5-deoxy-glucuronate (5DG) to 5-dehydro-2-deoxy-D-gluconate (DKG or 2-deoxy-5-keto-D-gluconate). The sequence is that of 5-deoxy-glucuronate isomerase from Halalkalibacterium halodurans (strain ATCC BAA-125 / DSM 18197 / FERM 7344 / JCM 9153 / C-125) (Bacillus halodurans).